The sequence spans 50 residues: Metallothionein zym1 (50 aa).

Positions 7, 15, 17, 21, 23, 26, 30, 32, 40, 42, 45, and 47 each coordinate Zn(2+).

This sequence belongs to the metallothionein superfamily.

It is found in the cytoplasm. Its subcellular location is the nucleus. Functionally, metallothionein involved in tolerance to zinc and cadmium. Binds four zinc ions. This chain is Metallothionein zym1 (zym1), found in Schizosaccharomyces pombe (strain 972 / ATCC 24843) (Fission yeast).